We begin with the raw amino-acid sequence, 526 residues long: CTP synthase (526 aa).

An amidoligase domain region spans residues Met1–Ile264. Ser14 provides a ligand contact to CTP. Ser14 serves as a coordination point for UTP. Residues Gly15 to Ile20 and Asp72 contribute to the ATP site. 2 residues coordinate Mg(2+): Asp72 and Glu138. Residues Asp145–Glu147, Lys185–Gln190, and Lys221 each bind CTP. Residues Lys185–Gln190 and Lys221 each bind UTP. Residues Lys282–Asp526 form the Glutamine amidotransferase type-1 domain. Residue Gly342 participates in L-glutamine binding. The active-site Nucleophile; for glutamine hydrolysis is Cys369. L-glutamine-binding positions include Leu370 to Gln373, Glu393, and Arg451. Catalysis depends on residues His499 and Glu501.

Belongs to the CTP synthase family. In terms of assembly, homotetramer.

The catalysed reaction is UTP + L-glutamine + ATP + H2O = CTP + L-glutamate + ADP + phosphate + 2 H(+). It catalyses the reaction L-glutamine + H2O = L-glutamate + NH4(+). The enzyme catalyses UTP + NH4(+) + ATP = CTP + ADP + phosphate + 2 H(+). Its pathway is pyrimidine metabolism; CTP biosynthesis via de novo pathway; CTP from UDP: step 2/2. Its activity is regulated as follows. Allosterically activated by GTP, when glutamine is the substrate; GTP has no effect on the reaction when ammonia is the substrate. The allosteric effector GTP functions by stabilizing the protein conformation that binds the tetrahedral intermediate(s) formed during glutamine hydrolysis. Inhibited by the product CTP, via allosteric rather than competitive inhibition. In terms of biological role, catalyzes the ATP-dependent amination of UTP to CTP with either L-glutamine or ammonia as the source of nitrogen. Regulates intracellular CTP levels through interactions with the four ribonucleotide triphosphates. The protein is CTP synthase of Thermosipho africanus (strain TCF52B).